Here is a 444-residue protein sequence, read N- to C-terminus: Alpha-N-acetylgalactosaminidase (444 aa).

Residues 30–31 (LR), Asp-52, Asn-80, 101–104 (WEWH), His-107, 121–122 (EV), and Asn-150 contribute to the NAD(+) site. Position 179 (Tyr-179) interacts with substrate. NAD(+) is bound at residue 208 to 212 (SEAKW). Substrate contacts are provided by residues Arg-213, 225 to 228 (YPTH), and Tyr-307. Tyr-225 is a binding site for NAD(+).

It belongs to the Gfo/Idh/MocA family. Glycosyl hydrolase 109 subfamily. It depends on NAD(+) as a cofactor.

The catalysed reaction is Cleavage of non-reducing alpha-(1-&gt;3)-N-acetylgalactosamine residues from human blood group A and AB mucin glycoproteins, Forssman hapten and blood group A lacto series glycolipids.. Functionally, glycosidase that has specific alpha-N-acetylgalactosaminidase activity. The sequence is that of Alpha-N-acetylgalactosaminidase (nagA) from Elizabethkingia meningoseptica (Chryseobacterium meningosepticum).